A 671-amino-acid chain; its full sequence is DNA ligase (671 aa).

Residues 32–36, 81–82, and glutamate 113 each bind NAD(+); these read DAEYD and SL. Residue lysine 115 is the N6-AMP-lysine intermediate of the active site. The NAD(+) site is built by arginine 136, glutamate 173, lysine 290, and lysine 314. Residues cysteine 408, cysteine 411, cysteine 426, and cysteine 432 each contribute to the Zn(2+) site. In terms of domain architecture, BRCT spans 593–671; it reads EIDSPFAGKT…EAEMIRLLGA (79 aa).

It belongs to the NAD-dependent DNA ligase family. LigA subfamily. The cofactor is Mg(2+). Mn(2+) is required as a cofactor.

It catalyses the reaction NAD(+) + (deoxyribonucleotide)n-3'-hydroxyl + 5'-phospho-(deoxyribonucleotide)m = (deoxyribonucleotide)n+m + AMP + beta-nicotinamide D-nucleotide.. In terms of biological role, DNA ligase that catalyzes the formation of phosphodiester linkages between 5'-phosphoryl and 3'-hydroxyl groups in double-stranded DNA using NAD as a coenzyme and as the energy source for the reaction. It is essential for DNA replication and repair of damaged DNA. The polypeptide is DNA ligase (Salmonella typhi).